Reading from the N-terminus, the 291-residue chain is ATP synthase gamma chain (291 aa).

It belongs to the ATPase gamma chain family. In terms of assembly, F-type ATPases have 2 components, CF(1) - the catalytic core - and CF(0) - the membrane proton channel. CF(1) has five subunits: alpha(3), beta(3), gamma(1), delta(1), epsilon(1). CF(0) has three main subunits: a, b and c.

The protein resides in the cell inner membrane. Its function is as follows. Produces ATP from ADP in the presence of a proton gradient across the membrane. The gamma chain is believed to be important in regulating ATPase activity and the flow of protons through the CF(0) complex. This is ATP synthase gamma chain from Cupriavidus necator (strain ATCC 17699 / DSM 428 / KCTC 22496 / NCIMB 10442 / H16 / Stanier 337) (Ralstonia eutropha).